The chain runs to 447 residues: 3-phosphoshikimate 1-carboxyvinyltransferase 2 (447 aa).

Lys40, Ser41, and Arg45 together coordinate 3-phosphoshikimate. Lys40 contacts phosphoenolpyruvate. Phosphoenolpyruvate is bound by residues Gly109 and Arg138. 5 residues coordinate 3-phosphoshikimate: Ser184, Ser185, Gln186, Asp329, and His356. Phosphoenolpyruvate is bound at residue Gln186. Asp329 functions as the Proton acceptor in the catalytic mechanism. The phosphoenolpyruvate site is built by Arg360, Arg403, and Lys428.

It belongs to the EPSP synthase family. As to quaternary structure, monomer.

The protein resides in the cytoplasm. It carries out the reaction 3-phosphoshikimate + phosphoenolpyruvate = 5-O-(1-carboxyvinyl)-3-phosphoshikimate + phosphate. It participates in metabolic intermediate biosynthesis; chorismate biosynthesis; chorismate from D-erythrose 4-phosphate and phosphoenolpyruvate: step 6/7. Catalyzes the transfer of the enolpyruvyl moiety of phosphoenolpyruvate (PEP) to the 5-hydroxyl of shikimate-3-phosphate (S3P) to produce enolpyruvyl shikimate-3-phosphate and inorganic phosphate. In Halalkalibacterium halodurans (strain ATCC BAA-125 / DSM 18197 / FERM 7344 / JCM 9153 / C-125) (Bacillus halodurans), this protein is 3-phosphoshikimate 1-carboxyvinyltransferase 2.